Reading from the N-terminus, the 484-residue chain is Hemogen (484 aa).

Positions 1–25 are enriched in basic and acidic residues; that stretch reads MDLGKDQSHLKHHQTPDPHQEENHS. 2 disordered regions span residues 1–32 and 44–91; these read MDLGKDQSHLKHHQTPDPHQEENHSPEVIGTW and KAEV…PQPQ. Positions 7–87 are necessary for nuclear localization; the sequence is QSHLKHHQTP…RQQNTELKVE (81 aa). A compositionally biased stretch (basic residues) spans 61–79; the sequence is KKRKQQRTGKGNRRGRKRQ. Residues S123, S159, S181, S188, and S201 each carry the phosphoserine modification. T246 bears the Phosphothreonine mark. Disordered stretches follow at residues 265–290, 306–369, and 386–471; these read DVPKGYILDTDQNPAEPEEYNETDQG, EPKD…YSPE, and QETS…ILNE. Residues 306–320 show a composition bias toward basic and acidic residues; the sequence is EPKDLSTKTHQESAE. A phosphoserine mark is found at S349 and S353. T360 bears the Phosphothreonine mark. Phosphoserine occurs at positions 363 and 367. 3 stretches are compositionally biased toward basic and acidic residues: residues 413 to 428, 438 to 447, and 454 to 463; these read YKNKDVPKECFPEPHQ, PKAHQEDAKD, and EMKEKPKEEP.

In terms of tissue distribution, expressed in hematopoietic precursor cells, thyroid and spermatids (at protein level). Expressed in bone marrow, testis, thymus. Expressed in prostate cancer and ovarian cancer. Also expressed in thymus and thyroid tumors, non-Hodgkin lymphoma, various leukemia cell lines, peripheral blood mononuclear cells (PBMCs) and bone marrow mononuclear cells (BMMCs) of patients with leukemia.

It localises to the nucleus. Functionally, regulates the proliferation and differentiation of hematopoietic cells. Overexpression block the TPA-induced megakaryocytic differentiation in the K562 cell model. May also prevent cell apoptosis through the activation of the nuclear factor-kappa B (NF-kB). This Homo sapiens (Human) protein is Hemogen (HEMGN).